We begin with the raw amino-acid sequence, 2748 residues long: Nuclear migration protein NUM1 (2748 aa).

Positions 1 to 10 (MSHNNRHKKN) are enriched in basic residues. 2 disordered regions span residues 1–36 (MSHN…VSTN) and 290–312 (YYQK…GTTS). Polar residues predominate over residues 17-36 (AGQYANSIDNSLSQESVSTN). A compositionally biased stretch (low complexity) spans 293 to 304 (KQHTSDTTVTSD). A run of 12 repeats spans residues 593–656 (PSLE…KLEQ), 657–727 (PSLE…EVEQ), 728–798 (PSLA…EVEQ), 799–862 (PSLA…KLEQ), 863–926 (PSLA…KLEQ), 927–990 (PSLA…KLEQ), 991–1054 (PSLE…KLEQ), 1055–1118 (PSLE…KLEQ), 1119–1182 (PSLE…KLEQ), 1183–1246 (PSLA…KLEQ), 1247–1310 (PSLA…KLEQ), and 1311–1374 (PSLE…KLEQ). Residues 593–1384 (PSLEYLVEHA…PSLEYLVKHA (792 aa)) are 13 X tandem repeats. Residues Ser611, Ser675, and Ser746 each carry the phosphoserine modification. Phosphoserine is present on residues Ser881, Ser945, and Ser1009. Ser1201, Ser1265, and Ser1329 each carry phosphoserine. Residues 1375–1384 (PSLEYLVKHA) form a 13; truncated repeat. Residues 2111 to 2133 (ERAERIDEQSINTTSSNSTTTSS) form a disordered region. Positions 2122–2133 (NTTSSNSTTTSS) are enriched in low complexity. Ser2162, Ser2164, Ser2197, Ser2217, Ser2220, Ser2221, Ser2360, and Ser2424 each carry phosphoserine. Over residues 2444–2460 (KEDKKGQATASKHEYVS) the composition is skewed to basic and acidic residues. Positions 2444–2536 (KEDKKGQATA…HSSRNTPASR (93 aa)) are disordered. Positions 2465-2474 (NKTSTVSTKS) are enriched in polar residues. Over residues 2492–2503 (SESHPQIEEQSH) the composition is skewed to basic and acidic residues. Phosphoserine is present on Ser2494. Basic residues predominate over residues 2504–2514 (RTNHHKHHKRQ). The segment covering 2516 to 2532 (SLNSNSTSKTTHSSRNT) has biased composition (low complexity). Ser2545 carries the post-translational modification Phosphoserine. Residues 2573–2683 (QTVIGEYLFK…WYNSLRYLLQ (111 aa)) enclose the PH domain. The tract at residues 2707–2748 (IFPLPGENTKSSSKRLSASRRSVSTRSLRHRVPQSRSFGNLR) is disordered. Over residues 2720-2730 (KRLSASRRSVS) the composition is skewed to low complexity.

In terms of assembly, interacts with PAC11 when DYN1 is present, and TUB3.

The protein resides in the bud tip. Controls nuclear migration. NUM1 specifically controls the interaction of the bud neck cytoskeleton with the pre-divisional G2 nucleus. Functions in dynein-anchoring. During late anaphase forms dynein-interacting cortical microtubule capture sites at both cellular poles. This leads to dynein-dependent sliding of the microtubules in the bud. The polypeptide is Nuclear migration protein NUM1 (NUM1) (Saccharomyces cerevisiae (strain ATCC 204508 / S288c) (Baker's yeast)).